The following is a 464-amino-acid chain: Mothers against decapentaplegic homolog 5 (464 aa).

Positions 13 to 137 (PAVKRLLGWK…YKRVESPVLP (125 aa)) constitute an MH1 domain. Positions 65, 110, 122, and 127 each coordinate Zn(2+). The disordered stretch occupies residues 166–258 (HMPLNATFPE…LAPQNMPRGD (93 aa)). Polar residues predominate over residues 173-183 (FPESFQQHSGG). The span at 199-216 (ASSGTYPNSPASSGPSSP) shows a compositional bias: low complexity. The span at 237 to 251 (QDGSQSMETGSSLAP) shows a compositional bias: polar residues. Residues 270-464 (WCSIVYYELN…SPLNPISSVS (195 aa)) enclose the MH2 domain.

The protein belongs to the dwarfin/SMAD family. As to quaternary structure, may form trimers with the co-SMAD SMAD4.

The protein localises to the cytoplasm. The protein resides in the nucleus. In terms of biological role, involved in ventralization. May mediate Bmp2b signaling during early phases of embryonic dorsal-ventral pattern formation. Required for initiation of Smad1 expression during gastrulation. The protein is Mothers against decapentaplegic homolog 5 (smad5) of Danio rerio (Zebrafish).